Here is a 614-residue protein sequence, read N- to C-terminus: ATP-dependent RNA helicase dbp-3 (614 aa).

The tract at residues 1 to 138 is disordered; that stretch reads MSSTKKHSRS…GTTTPAASTN (138 aa). Residues 9–36 are compositionally biased toward basic and acidic residues; the sequence is RSEGEEKDARLAKKVKTDETPVDGEVKK. 2 stretches are compositionally biased toward basic residues: residues 37 to 58 and 91 to 109; these read ERKKDKKEKKDKKEKKDKKSKK and KKEKKDKKEKKDKKEKKAK. The span at 117-138 shows a compositional bias: low complexity; that stretch reads EESTSASKATTNGTTTPAASTN. The Q motif signature appears at 180 to 207; the sequence is MNFSQLPQSNLISKNPFAAYTNPTPIQS. The 185-residue stretch at 210 to 394 folds into the Helicase ATP-binding domain; the sequence is WPFSLSGRDV…ESYMINPAQV (185 aa). 223–230 contacts ATP; sequence AETGSGKT. The DEAD box motif lies at 340 to 343; sequence DEAD. In terms of domain architecture, Helicase C-terminal spans 435 to 584; that stretch reads RLYELLKEAQ…PVPEELLKFG (150 aa).

This sequence belongs to the DEAD box helicase family. DDX5/DBP2 subfamily.

It localises to the nucleus. The protein localises to the nucleolus. It carries out the reaction ATP + H2O = ADP + phosphate + H(+). ATP-dependent RNA helicase required for 60S ribosomal subunit synthesis. Involved in efficient pre-rRNA processing, predominantly at site A3, which is necessary for the normal formation of 25S and 5.8S rRNAs. This is ATP-dependent RNA helicase dbp-3 (dbp-3) from Neurospora crassa (strain ATCC 24698 / 74-OR23-1A / CBS 708.71 / DSM 1257 / FGSC 987).